Reading from the N-terminus, the 565-residue chain is Sulfite reductase [NADPH] hemoprotein beta-component (565 aa).

[4Fe-4S] cluster-binding residues include cysteine 429, cysteine 435, cysteine 474, and cysteine 478. Cysteine 478 lines the siroheme pocket.

It belongs to the nitrite and sulfite reductase 4Fe-4S domain family. In terms of assembly, alpha(8)-beta(8). The alpha component is a flavoprotein, the beta component is a hemoprotein. Siroheme serves as cofactor. [4Fe-4S] cluster is required as a cofactor.

The enzyme catalyses hydrogen sulfide + 3 NADP(+) + 3 H2O = sulfite + 3 NADPH + 4 H(+). It participates in sulfur metabolism; hydrogen sulfide biosynthesis; hydrogen sulfide from sulfite (NADPH route): step 1/1. In terms of biological role, component of the sulfite reductase complex that catalyzes the 6-electron reduction of sulfite to sulfide. This is one of several activities required for the biosynthesis of L-cysteine from sulfate. This is Sulfite reductase [NADPH] hemoprotein beta-component from Shewanella loihica (strain ATCC BAA-1088 / PV-4).